Here is a 301-residue protein sequence, read N- to C-terminus: tRNA-cytidine(32) 2-sulfurtransferase (301 aa).

Positions 55–60 (SGGKDS) match the PP-loop motif motif. Positions 130, 133, and 221 each coordinate [4Fe-4S] cluster.

The protein belongs to the TtcA family. In terms of assembly, homodimer. The cofactor is Mg(2+). [4Fe-4S] cluster is required as a cofactor.

It localises to the cytoplasm. It catalyses the reaction cytidine(32) in tRNA + S-sulfanyl-L-cysteinyl-[cysteine desulfurase] + AH2 + ATP = 2-thiocytidine(32) in tRNA + L-cysteinyl-[cysteine desulfurase] + A + AMP + diphosphate + H(+). The protein operates within tRNA modification. Catalyzes the ATP-dependent 2-thiolation of cytidine in position 32 of tRNA, to form 2-thiocytidine (s(2)C32). The sulfur atoms are provided by the cysteine/cysteine desulfurase (IscS) system. The polypeptide is tRNA-cytidine(32) 2-sulfurtransferase (Acinetobacter baylyi (strain ATCC 33305 / BD413 / ADP1)).